The following is a 71-amino-acid chain: Conotoxin Tx11.3 (71 aa).

A signal peptide spans 1–19 (MKLCVTFLLVLVILPSVTG). A propeptide spanning residues 20–47 (VKSSERTLSGAALRGDRGTCSGRGQECK) is cleaved from the precursor. Intrachain disulfides connect cysteine 39–cysteine 53, cysteine 46–cysteine 58, cysteine 52–cysteine 63, and cysteine 57–cysteine 70.

This sequence belongs to the I1 superfamily. Expressed by the venom duct.

The protein resides in the secreted. The sequence is that of Conotoxin Tx11.3 from Conus textile (Cloth-of-gold cone).